The following is a 540-amino-acid chain: CWF19-like protein 1 (540 aa).

A disordered region spans residues 265 to 326 (ENPYRKSDKD…AKQPRKHPQP (62 aa)). The span at 267 to 277 (PYRKSDKDTPK) shows a compositional bias: basic and acidic residues.

The protein belongs to the CWF19 family.

This is CWF19-like protein 1 (cwf19l1) from Xenopus laevis (African clawed frog).